We begin with the raw amino-acid sequence, 373 residues long: Centrosomal protein of 41 kDa (373 aa).

The interval 91 to 137 (LEDNDSATSEADAEIAAKTNGKGSPEEQSPSPVQFINSTGAGDSSRS) is disordered. Phosphoserine is present on residues serine 96 and serine 99. Threonine 109 carries the phosphothreonine modification. Serine 114 and serine 121 each carry phosphoserine. Positions 116–137 (EEQSPSPVQFINSTGAGDSSRS) are enriched in polar residues. A Rhodanese domain is found at 169–266 (PDCPFLLLDV…LAQKFPEGLV (98 aa)). Residues 317 to 373 (DQGPADNPSRLNQNNSAGKDSKVAACRGGQNLPTSCPASHSSPRTLTSGHLQGKPWK) form a disordered region. Residues 325–334 (SRLNQNNSAG) show a composition bias toward polar residues. At arginine 343 the chain carries Omega-N-methylarginine. Residues 347–366 (NLPTSCPASHSSPRTLTSGH) are compositionally biased toward polar residues.

It belongs to the CEP41 family. As to quaternary structure, found in a complex with TTLL6.

It is found in the cytoplasm. It localises to the cytoskeleton. Its subcellular location is the microtubule organizing center. The protein localises to the centrosome. The protein resides in the cell projection. It is found in the cilium. It localises to the cilium basal body. Required during ciliogenesis for tubulin glutamylation in cilium. Probably acts by participating in the transport of TTLL6, a tubulin polyglutamylase, between the basal body and the cilium. The sequence is that of Centrosomal protein of 41 kDa (Cep41) from Mus musculus (Mouse).